Here is an 82-residue protein sequence, read N- to C-terminus: Putative Fe(2+) transport protein A (82 aa).

Belongs to the FeoA family.

Might be involved in Fe(2+) ion uptake. In Methanocaldococcus jannaschii (strain ATCC 43067 / DSM 2661 / JAL-1 / JCM 10045 / NBRC 100440) (Methanococcus jannaschii), this protein is Putative Fe(2+) transport protein A.